Consider the following 369-residue polypeptide: Probable trehalose-phosphate phosphatase I (369 aa).

Belongs to the trehalose phosphatase family. Requires a divalent metal cation as cofactor.

It catalyses the reaction alpha,alpha-trehalose 6-phosphate + H2O = alpha,alpha-trehalose + phosphate. It participates in glycan biosynthesis; trehalose biosynthesis. In terms of biological role, removes the phosphate from trehalose 6-phosphate to produce free trehalose. Trehalose accumulation in plant may improve abiotic stress tolerance. This chain is Probable trehalose-phosphate phosphatase I (TPPI), found in Arabidopsis thaliana (Mouse-ear cress).